Here is a 384-residue protein sequence, read N- to C-terminus: S-adenosylmethionine synthase (384 aa).

H15 contacts ATP. D17 contributes to the Mg(2+) binding site. E43 contributes to the K(+) binding site. L-methionine is bound by residues E56 and Q99. The segment at 99 to 109 is flexible loop; it reads QSPDINQGVDR. Residues 164-166, 231-232, D240, 246-247, A263, and K267 each bind ATP; these read DAK, RF, and RK. L-methionine is bound at residue D240. Position 271 (K271) interacts with L-methionine.

It belongs to the AdoMet synthase family. In terms of assembly, homotetramer; dimer of dimers. The cofactor is Mg(2+). It depends on K(+) as a cofactor.

It localises to the cytoplasm. The catalysed reaction is L-methionine + ATP + H2O = S-adenosyl-L-methionine + phosphate + diphosphate. It participates in amino-acid biosynthesis; S-adenosyl-L-methionine biosynthesis; S-adenosyl-L-methionine from L-methionine: step 1/1. Its function is as follows. Catalyzes the formation of S-adenosylmethionine (AdoMet) from methionine and ATP. The overall synthetic reaction is composed of two sequential steps, AdoMet formation and the subsequent tripolyphosphate hydrolysis which occurs prior to release of AdoMet from the enzyme. The sequence is that of S-adenosylmethionine synthase from Shewanella pealeana (strain ATCC 700345 / ANG-SQ1).